The primary structure comprises 59 residues: uncharacterized protein (59 aa).

The interval 1–59 (MAKKPGENTGKNGGIYQEVGPRGGKKDNFATVKDNERLPPTTKPGNGWVLDKRTPDSKK) is disordered. 2 stretches are compositionally biased toward basic and acidic residues: residues 24–37 (GKKDNFATVKDNER) and 50–59 (LDKRTPDSKK).

This is an uncharacterized protein from Salmonella phage P22 (Bacteriophage P22).